A 289-amino-acid polypeptide reads, in one-letter code: Shikimate kinase (289 aa).

84-94 contacts ATP; it reads PVASGLSSSSA.

It belongs to the GHMP kinase family. Archaeal shikimate kinase subfamily.

The protein localises to the cytoplasm. It catalyses the reaction shikimate + ATP = 3-phosphoshikimate + ADP + H(+). The protein operates within metabolic intermediate biosynthesis; chorismate biosynthesis; chorismate from D-erythrose 4-phosphate and phosphoenolpyruvate: step 5/7. This is Shikimate kinase (aroK) from Methanothermobacter thermautotrophicus (strain ATCC 29096 / DSM 1053 / JCM 10044 / NBRC 100330 / Delta H) (Methanobacterium thermoautotrophicum).